The sequence spans 359 residues: Peptide chain release factor 1 (359 aa).

N5-methylglutamine is present on Q235. A disordered region spans residues 280-306 (AERQRADSERSADRKSQVGSGDRSERI).

The protein belongs to the prokaryotic/mitochondrial release factor family. In terms of processing, methylated by PrmC. Methylation increases the termination efficiency of RF1.

It is found in the cytoplasm. Peptide chain release factor 1 directs the termination of translation in response to the peptide chain termination codons UAG and UAA. The polypeptide is Peptide chain release factor 1 (Rhizobium johnstonii (strain DSM 114642 / LMG 32736 / 3841) (Rhizobium leguminosarum bv. viciae)).